The primary structure comprises 77 residues: Small ribosomal subunit protein bS18 (77 aa).

This sequence belongs to the bacterial ribosomal protein bS18 family. As to quaternary structure, part of the 30S ribosomal subunit. Forms a tight heterodimer with protein bS6.

Binds as a heterodimer with protein bS6 to the central domain of the 16S rRNA, where it helps stabilize the platform of the 30S subunit. The chain is Small ribosomal subunit protein bS18 from Shouchella clausii (strain KSM-K16) (Alkalihalobacillus clausii).